Consider the following 326-residue polypeptide: Tetraacyldisaccharide 4'-kinase (326 aa).

53-60 (SVGGNGKT) contributes to the ATP binding site.

It belongs to the LpxK family.

The enzyme catalyses a lipid A disaccharide + ATP = a lipid IVA + ADP + H(+). The protein operates within glycolipid biosynthesis; lipid IV(A) biosynthesis; lipid IV(A) from (3R)-3-hydroxytetradecanoyl-[acyl-carrier-protein] and UDP-N-acetyl-alpha-D-glucosamine: step 6/6. In terms of biological role, transfers the gamma-phosphate of ATP to the 4'-position of a tetraacyldisaccharide 1-phosphate intermediate (termed DS-1-P) to form tetraacyldisaccharide 1,4'-bis-phosphate (lipid IVA). The polypeptide is Tetraacyldisaccharide 4'-kinase (Actinobacillus pleuropneumoniae serotype 7 (strain AP76)).